Here is a 101-residue protein sequence, read N- to C-terminus: Small ribosomal subunit protein uS14 (101 aa).

This sequence belongs to the universal ribosomal protein uS14 family. Part of the 30S ribosomal subunit. Contacts proteins S3 and S10.

Its function is as follows. Binds 16S rRNA, required for the assembly of 30S particles and may also be responsible for determining the conformation of the 16S rRNA at the A site. The sequence is that of Small ribosomal subunit protein uS14 from Bartonella quintana (strain Toulouse) (Rochalimaea quintana).